Here is a 132-residue protein sequence, read N- to C-terminus: MAYLGKVYKFDREENFDGFLKSIGLSEEQVQKYLQYKPSSQLVKEGDKYKYISVSSDGTKETVFESGVETDDVVQGGLPIKTTYTVDGNTVTQVVNSAQGSATFKREYNGDELKVTITSSEWDGVAYRYYKA.

A fatty acid contacts are provided by residues Arg-106 and 128–130 (RYY).

This sequence belongs to the calycin superfamily. Fatty-acid binding protein (FABP) family. In terms of assembly, monomer. Midgut.

It is found in the cytoplasm. Its function is as follows. Binds fatty acids in a 1:1 molar ratio. This is Fatty acid-binding protein 1 (MFB1) from Manduca sexta (Tobacco hawkmoth).